Reading from the N-terminus, the 148-residue chain is Protein mago nashi homolog 2 (148 aa).

The residue at position 2 (Ala2) is an N-acetylalanine.

It belongs to the mago nashi family. In terms of assembly, component of the pre-catalytic, catalytic and post-catalytic spliceosome complexes. Heterodimer with RBM8A. Core component of the mRNA splicing-dependent exon junction complex (EJC); the core complex contains CASC3, EIF4A3, MAGOH or MAGOHB, and RBM8A.

It is found in the nucleus. Functionally, required for pre-mRNA splicing as component of the spliceosome. Plays a redundant role with MAGOH in the exon junction complex and in the nonsense-mediated decay (NMD) pathway. This chain is Protein mago nashi homolog 2 (MAGOHB), found in Bos taurus (Bovine).